A 261-amino-acid chain; its full sequence is General secretion pathway protein N (261 aa).

The Cytoplasmic segment spans residues 1-10 (MRLEMIGLRT). The helical transmembrane segment at 11 to 31 (WLLATVVGWALLVCVLAVAGL) threads the bilayer. Residues 32–261 (GKRVELLPDD…QGGSTPGQTQ (230 aa)) are Periplasmic-facing. Residues 158–261 (VFNGQGGQPP…QGGSTPGQTQ (104 aa)) form a disordered region. Residues 179–200 (AVPPLPPNVPPAPATPAPPPAE) show a composition bias toward pro residues. Low complexity predominate over residues 201-211 (VPQQQPGGQAP). The segment covering 227–244 (RPSDEQMRAIRERIEARR) has biased composition (basic and acidic residues).

As to quaternary structure, binds to XpsD.

Its subcellular location is the cell inner membrane. Its function is as follows. Involved in a general secretion pathway (GSP) for the export of proteins. The protein is General secretion pathway protein N (xpsN) of Xanthomonas campestris pv. campestris (strain ATCC 33913 / DSM 3586 / NCPPB 528 / LMG 568 / P 25).